The following is a 137-amino-acid chain: Large ribosomal subunit protein bL17 (137 aa).

The protein belongs to the bacterial ribosomal protein bL17 family. As to quaternary structure, part of the 50S ribosomal subunit. Contacts protein L32.

This is Large ribosomal subunit protein bL17 from Bradyrhizobium sp. (strain BTAi1 / ATCC BAA-1182).